Here is a 664-residue protein sequence, read N- to C-terminus: MHQDYFEHDVIVVGGGHSGSEAAAAAANMGADTLLITMKLADIGQMSCNPAIGGIGKGHIAREIDALGGIMGKATDRAGIQFRMLNKSKGPAVWGPRAQCGRRAYARAIRQELEAIDNLKMRSDMVKEILTDDAGETVTGVRTNLGKEFRAPCVVLTTGTFSNGVIHVGEQNFGGGRIGESASHGITGCLHDLGFESGRLKTGTPPRVDGRSIDYSVMEKQPGDPDATAFSFLTDDLPSVEAQLSCWLTDTTPETHEVLRTGFDRSPMFTGALDADGPRYCPSIEDKIDRFSEKDHHQLFIEPEGRDTHEVYVNGFSSSLPEEVQFEALRTVPGMEEAHMHRPGYAIEYDFFPPYQIEYSLETKYVDGLFFAGQINGTTGYEEAAAQGIMAGINAVQKLRQADPIVLKRSEAYIGVLIDDLVAKGTDEPYRMFTSRAEHRILLRQDNADQRLTELGHKLGLASKERLDRTREKERAIDVTRETLSDTTVSPQQVDDYLQSVGTSTLNQPRPVIELCKRPEVDSEDLLRHAGLYDEVVTEAPGMLSAPRLIEIDLKYEGYIDRQKDMVEEMEEKERWPIPDDFDYHALDNISIEARQKLSKVEPDNLGQASRVPGVRASDISVLMVLLKNEGVEPMPKDRDLNLDAMGGDGQSFGVSRETAVEVG.

FAD is bound by residues G14–G19, V126, and S183. NAD(+) is bound at residue G277 to F291. Position 374 (Q374) interacts with FAD.

The protein belongs to the MnmG family. In terms of assembly, homodimer. Heterotetramer of two MnmE and two MnmG subunits. The cofactor is FAD.

It is found in the cytoplasm. In terms of biological role, NAD-binding protein involved in the addition of a carboxymethylaminomethyl (cmnm) group at the wobble position (U34) of certain tRNAs, forming tRNA-cmnm(5)s(2)U34. The sequence is that of tRNA uridine 5-carboxymethylaminomethyl modification enzyme MnmG from Salinibacter ruber (strain DSM 13855 / M31).